The following is a 636-amino-acid chain: Threonine--tRNA ligase (636 aa).

The region spanning 1–63 is the TGS domain; that stretch reads MNEINVTLPD…ADGARVEIIT (63 aa). The tract at residues 243-534 is catalytic; it reads DHRKLGRELD…LIEHFAGNFP (292 aa). 3 residues coordinate Zn(2+): cysteine 335, histidine 386, and histidine 511.

The protein belongs to the class-II aminoacyl-tRNA synthetase family. As to quaternary structure, homodimer. Requires Zn(2+) as cofactor.

Its subcellular location is the cytoplasm. It carries out the reaction tRNA(Thr) + L-threonine + ATP = L-threonyl-tRNA(Thr) + AMP + diphosphate + H(+). Catalyzes the attachment of threonine to tRNA(Thr) in a two-step reaction: L-threonine is first activated by ATP to form Thr-AMP and then transferred to the acceptor end of tRNA(Thr). Also edits incorrectly charged L-seryl-tRNA(Thr). This is Threonine--tRNA ligase from Citrifermentans bemidjiense (strain ATCC BAA-1014 / DSM 16622 / JCM 12645 / Bem) (Geobacter bemidjiensis).